A 343-amino-acid chain; its full sequence is UDP-3-O-(3-hydroxymyristoyl)glucosamine N-acyltransferase (343 aa).

The active-site Proton acceptor is H239.

This sequence belongs to the transferase hexapeptide repeat family. LpxD subfamily. Homotrimer.

The enzyme catalyses a UDP-3-O-[(3R)-3-hydroxyacyl]-alpha-D-glucosamine + a (3R)-hydroxyacyl-[ACP] = a UDP-2-N,3-O-bis[(3R)-3-hydroxyacyl]-alpha-D-glucosamine + holo-[ACP] + H(+). It carries out the reaction UDP-3-O-[(3R)-3-hydroxytetradecanoyl]-alpha-D-glucosamine + (3R)-hydroxytetradecanoyl-[ACP] = UDP-2-N,3-O-bis[(3R)-3-hydroxytetradecanoyl]-alpha-D-glucosamine + holo-[ACP] + H(+). The protein operates within glycolipid biosynthesis; lipid IV(A) biosynthesis; lipid IV(A) from (3R)-3-hydroxytetradecanoyl-[acyl-carrier-protein] and UDP-N-acetyl-alpha-D-glucosamine: step 3/6. In terms of biological role, catalyzes the N-acylation of UDP-3-O-(hydroxytetradecanoyl)glucosamine using 3-hydroxytetradecanoyl-ACP as the acyl donor. Is involved in the biosynthesis of lipid A, a phosphorylated glycolipid that anchors the lipopolysaccharide to the outer membrane of the cell. This Blochmanniella pennsylvanica (strain BPEN) protein is UDP-3-O-(3-hydroxymyristoyl)glucosamine N-acyltransferase.